The primary structure comprises 521 residues: Spermidine transporter DUR31 (521 aa).

A helical transmembrane segment spans residues 11 to 31; it reads AIIYLSYAFMLATGLFLAWKF. A glycan (N-linked (GlcNAc...) asparagine) is linked at Asn-41. 12 helical membrane passes run 47–67, 79–99, 117–137, 156–176, 187–207, 227–247, 264–284, 310–330, 354–374, 377–397, 406–426, and 453–473; these read IPLA…TTYA, LVYT…GPVI, FGMV…FLFM, ALGA…FGGF, GVCV…YIEI, LVYI…GFWL, IAAF…FLAV, WLVA…FDSL, IMLI…ADNI, IYLI…LGLA, GFDV…FGTV, and FGAF…SAAL.

Belongs to the sodium:solute symporter (SSF) (TC 2.A.21) family.

It localises to the membrane. It carries out the reaction spermidine(in) = spermidine(out). Its function is as follows. Spermidine transporter that is also used by salivary gland-secreted histatin 5 (Hst 5) to enter into candidal cells. A major component of host nonimmune defense systems is salivary histatins, a family of small (3-4 kDa), histidine-rich, cationic proteins secreted by major salivary glands in humans and higher primates. Hst 5 is the most potent of the 12 histatin family members and has fungicidal activity against blastoconidial and filamentous forms of Candida albicans. DUR31 only functions under high concentrations of Hst 5. Hst 5 cojugates to spermidine to be uptaken by DUR31. The sequence is that of Spermidine transporter DUR31 from Candida albicans (strain SC5314 / ATCC MYA-2876) (Yeast).